Here is a 430-residue protein sequence, read N- to C-terminus: uncharacterized protein (430 aa).

The next 2 helical transmembrane spans lie at 20–40 (YLCL…GIMP) and 405–425 (YIWW…LLVI).

Its subcellular location is the membrane. This is an uncharacterized protein from Schizosaccharomyces pombe (strain 972 / ATCC 24843) (Fission yeast).